Consider the following 317-residue polypeptide: Melanocyte-stimulating hormone receptor (317 aa).

Topologically, residues 1–37 (MPVQGSQRRLLGSLNSTPTATPHLGLAANQTGARCLE) are extracellular. An N-linked (GlcNAc...) asparagine glycan is attached at Asn-29. Residues 38 to 63 (VSIPDGLFLSLGLVSLVENVLVVTAI) traverse the membrane as a helical segment. The Cytoplasmic portion of the chain corresponds to 64 to 72 (AKNRNLHSP). Residues 73-93 (MYCFICCLALSDLLVSGSNML) traverse the membrane as a helical segment. Over 94–118 (ETAVILLLEAGALAARAAVVQQLDN) the chain is Extracellular. The helical transmembrane segment at 119 to 140 (VIDVITCSSMLSSLCFLGAIAV) threads the bilayer. The Cytoplasmic portion of the chain corresponds to 141–163 (DRYISIFYALRYHSIVTLPRARR). A helical membrane pass occupies residues 164-183 (AVAAIWVASVLFSMLFIAYY). The Extracellular portion of the chain corresponds to 184–191 (DHAAVLLC). Residues 192–211 (LVVFFLAMLVLMAVLYVHML) traverse the membrane as a helical segment. Over 212–240 (ARACQHAQGIARLHKRQRPAHQSFGLKGA) the chain is Cytoplasmic. The chain crosses the membrane as a helical span at residues 241–266 (ATLTILLGIFFLCWGPFFLHLTLIVL). At 267–279 (CPQHPTCSCIFKN) the chain is on the extracellular side. A helical membrane pass occupies residues 280–300 (FNLFLTLIICNAIIDPLIYAF). The Cytoplasmic portion of the chain corresponds to 301–317 (RSQELRRTLKEVLLCSW). Cys-315 carries the S-palmitoyl cysteine lipid modification.

This sequence belongs to the G-protein coupled receptor 1 family. As to quaternary structure, interacts with MGRN1, but does not undergo MGRN1-mediated ubiquitination; this interaction competes with GNAS-binding and thus inhibits agonist-induced cAMP production. Interacts with OPN3; the interaction results in a decrease in MC1R-mediated cAMP signaling and ultimately a decrease in melanin production in melanocytes.

The protein resides in the cell membrane. Receptor for MSH (alpha, beta and gamma) and ACTH. The activity of this receptor is mediated by G proteins which activate adenylate cyclase. Mediates melanogenesis, the production of eumelanin (black/brown) and phaeomelanin (red/yellow), via regulation of cAMP signaling in melanocytes. The sequence is that of Melanocyte-stimulating hormone receptor (MC1R) from Erythrocebus patas (Red guenon).